We begin with the raw amino-acid sequence, 570 residues long: Mitogen-activated protein kinase 11 (570 aa).

A Protein kinase domain is found at 26–317; it reads YEVLEVIGKG…AQEALADPYF (292 aa). ATP contacts are provided by residues 32–40 and Lys55; that span reads IGKGSYGLV. Asp152 (proton acceptor) is an active-site residue. Thr188 carries the phosphothreonine modification. The TXY motif lies at 188-190; it reads TDY. Residue Tyr190 is modified to Phosphotyrosine.

It belongs to the protein kinase superfamily. CMGC Ser/Thr protein kinase family. MAP kinase subfamily. Post-translationally, dually phosphorylated on Thr-188 and Tyr-190, which activates the enzyme.

It carries out the reaction L-seryl-[protein] + ATP = O-phospho-L-seryl-[protein] + ADP + H(+). The enzyme catalyses L-threonyl-[protein] + ATP = O-phospho-L-threonyl-[protein] + ADP + H(+). With respect to regulation, activated by threonine and tyrosine phosphorylation. The sequence is that of Mitogen-activated protein kinase 11 (MPK11) from Oryza sativa subsp. japonica (Rice).